Here is a 121-residue protein sequence, read N- to C-terminus: Large ribosomal subunit protein bL12 (121 aa).

Belongs to the bacterial ribosomal protein bL12 family. In terms of assembly, homodimer. Part of the ribosomal stalk of the 50S ribosomal subunit. Forms a multimeric L10(L12)X complex, where L10 forms an elongated spine to which 2 to 4 L12 dimers bind in a sequential fashion. Binds GTP-bound translation factors.

Its function is as follows. Forms part of the ribosomal stalk which helps the ribosome interact with GTP-bound translation factors. Is thus essential for accurate translation. The chain is Large ribosomal subunit protein bL12 from Pseudomonas fluorescens (strain Pf0-1).